We begin with the raw amino-acid sequence, 122 residues long: Large ribosomal subunit protein uL14c (122 aa).

The protein belongs to the universal ribosomal protein uL14 family. In terms of assembly, part of the 50S ribosomal subunit.

It localises to the plastid. Its subcellular location is the chloroplast. Functionally, binds to 23S rRNA. This is Large ribosomal subunit protein uL14c from Huperzia lucidula (Shining clubmoss).